The primary structure comprises 505 residues: Glucose-6-phosphate 1-dehydrogenase (505 aa).

Serine 2 is modified (N-acetylserine). NADP(+) is bound by residues 18–25 (GASGDLAK) and arginine 52. A Phosphoserine modification is found at serine 142. The residue at position 145 (tyrosine 145) is a Phosphotyrosine. NADP(+) is bound at residue lysine 157. D-glucose 6-phosphate is bound by residues lysine 157, 187 to 191 (HYLGK), glutamate 225, and aspartate 244. Residue histidine 249 is the Proton acceptor of the active site. Arginine 340 contacts NADP(+). Lysine 343 contacts D-glucose 6-phosphate. NADP(+)-binding residues include lysine 349, arginine 353, and arginine 375. Glutamine 377 serves as a coordination point for D-glucose 6-phosphate. NADP(+) contacts are provided by residues 383–385 (YLK) and arginine 470.

The protein belongs to the glucose-6-phosphate dehydrogenase family.

It carries out the reaction D-glucose 6-phosphate + NADP(+) = 6-phospho-D-glucono-1,5-lactone + NADPH + H(+). The protein operates within carbohydrate degradation; pentose phosphate pathway; D-ribulose 5-phosphate from D-glucose 6-phosphate (oxidative stage): step 1/3. In terms of biological role, catalyzes the rate-limiting step of the oxidative pentose-phosphate pathway, which represents a route for the dissimilation of carbohydrates besides glycolysis. The main function of this enzyme is to provide reducing power (NADPH) and pentose phosphates for fatty acid and nucleic acid synthesis. The protein is Glucose-6-phosphate 1-dehydrogenase (ZWF1) of Saccharomyces cerevisiae (strain ATCC 204508 / S288c) (Baker's yeast).